An 837-amino-acid chain; its full sequence is Probable aldehyde oxidase 4 (837 aa).

The region spanning 9–98 (ERVVFELNGE…FCSIITTEGL (90 aa)) is the 2Fe-2S ferredoxin-type domain. 4 residues coordinate [2Fe-2S] cluster: C50, C55, C58, and C80. In terms of domain architecture, FAD-binding PCMH-type spans 240–427 (ISGPREGWYC…LSIFIPHWAS (188 aa)).

This sequence belongs to the xanthine dehydrogenase family. In terms of assembly, aldehyde oxidases (AO) are homodimers and heterodimers of AO subunits. Requires [2Fe-2S] cluster as cofactor. It depends on FAD as a cofactor. Mo-molybdopterin serves as cofactor.

The enzyme catalyses an aldehyde + O2 + H2O = a carboxylate + H2O2 + H(+). The sequence is that of Probable aldehyde oxidase 4 from Oryza sativa subsp. japonica (Rice).